A 318-amino-acid chain; its full sequence is Probable dual-specificity RNA methyltransferase RlmN (318 aa).

Glu63 (proton acceptor) is an active-site residue. In terms of domain architecture, Radical SAM core spans 69–299 (HDYGRTVCVS…VSLRRELGAD (231 aa)). The cysteines at positions 76 and 304 are disulfide-linked. Positions 83, 87, and 90 each coordinate [4Fe-4S] cluster. S-adenosyl-L-methionine contacts are provided by residues 130-131 (GE), Ser162, 185-187 (SLH), and Asn261. Residue Cys304 is the S-methylcysteine intermediate of the active site.

It belongs to the radical SAM superfamily. RlmN family. The cofactor is [4Fe-4S] cluster.

Its subcellular location is the cytoplasm. The enzyme catalyses adenosine(2503) in 23S rRNA + 2 reduced [2Fe-2S]-[ferredoxin] + 2 S-adenosyl-L-methionine = 2-methyladenosine(2503) in 23S rRNA + 5'-deoxyadenosine + L-methionine + 2 oxidized [2Fe-2S]-[ferredoxin] + S-adenosyl-L-homocysteine. It carries out the reaction adenosine(37) in tRNA + 2 reduced [2Fe-2S]-[ferredoxin] + 2 S-adenosyl-L-methionine = 2-methyladenosine(37) in tRNA + 5'-deoxyadenosine + L-methionine + 2 oxidized [2Fe-2S]-[ferredoxin] + S-adenosyl-L-homocysteine. In terms of biological role, specifically methylates position 2 of adenine 2503 in 23S rRNA and position 2 of adenine 37 in tRNAs. The sequence is that of Probable dual-specificity RNA methyltransferase RlmN from Desulforudis audaxviator (strain MP104C).